A 521-amino-acid chain; its full sequence is ATP synthase subunit beta (521 aa).

Low complexity-rich tracts occupy residues 1–21 and 28–42; these read MAKAATPKTTAAAEAKPAAKA and PKTTAAAKPAATKSG. A disordered region spans residues 1–42; that stretch reads MAKAATPKTTAAAEAKPAAKAPAKKAAPKTTAAAKPAATKSG. 199–206 contributes to the ATP binding site; that stretch reads GGAGVGKT.

Belongs to the ATPase alpha/beta chains family. F-type ATPases have 2 components, CF(1) - the catalytic core - and CF(0) - the membrane proton channel. CF(1) has five subunits: alpha(3), beta(3), gamma(1), delta(1), epsilon(1). CF(0) has three main subunits: a(1), b(2) and c(9-12). The alpha and beta chains form an alternating ring which encloses part of the gamma chain. CF(1) is attached to CF(0) by a central stalk formed by the gamma and epsilon chains, while a peripheral stalk is formed by the delta and b chains.

It localises to the cell inner membrane. It catalyses the reaction ATP + H2O + 4 H(+)(in) = ADP + phosphate + 5 H(+)(out). Its function is as follows. Produces ATP from ADP in the presence of a proton gradient across the membrane. The catalytic sites are hosted primarily by the beta subunits. The sequence is that of ATP synthase subunit beta from Brucella canis (strain ATCC 23365 / NCTC 10854 / RM-666).